We begin with the raw amino-acid sequence, 332 residues long: MQQVVYVASPESQQIHVWQLGAQGNLTLLQTVEVPGQVQPMAIAPNKRHLYVGVRPDFRVLSYRIDEQGKLTEAGVASLPGSPTHLSTDNDGRFLFSASYSGACVSVSPIDADGIVGEPIQQLDGLEGCHSTNIDPTNTVVWAPCLKEDRIRLYDLGSVGELSIHRQAEMTTVSGAGPRHMAFHPNQRFAYCVNELDSSVDVYQLDAASGDVQKVQTLDAMPAGFSDTRWAADIHITPNGNFLYISDRTASLLSVFQISEDGSTLTLTGHQPTETQPRGFNIDHTGEFLISAGQKSQHIEVYHIDQHTGDLQPLARYAVGQGPMWVAVLALD.

Belongs to the cycloisomerase 2 family.

It catalyses the reaction 6-phospho-D-glucono-1,5-lactone + H2O = 6-phospho-D-gluconate + H(+). It participates in carbohydrate degradation; pentose phosphate pathway; D-ribulose 5-phosphate from D-glucose 6-phosphate (oxidative stage): step 2/3. Catalyzes the hydrolysis of 6-phosphogluconolactone to 6-phosphogluconate. This Pectobacterium atrosepticum (strain SCRI 1043 / ATCC BAA-672) (Erwinia carotovora subsp. atroseptica) protein is 6-phosphogluconolactonase.